A 142-amino-acid polypeptide reads, in one-letter code: Acidic phospholipase A2 Bc-PL (142 aa).

An N-terminal signal peptide occupies residues 1–9 (AVCVSLLGA). The propeptide occupies 10-17 (ANIPPQPL). Disulfide bonds link cysteine 28/cysteine 94, cysteine 44/cysteine 141, cysteine 46/cysteine 62, cysteine 61/cysteine 122, cysteine 68/cysteine 115, cysteine 78/cysteine 108, and cysteine 101/cysteine 113. Ca(2+)-binding residues include tyrosine 45, glycine 47, and glycine 49. The active site involves histidine 65. Aspartate 66 is a Ca(2+) binding site. The active site involves aspartate 116.

It belongs to the phospholipase A2 family. Group I subfamily. D49 sub-subfamily. It depends on Ca(2+) as a cofactor. As to expression, expressed by the venom gland.

The protein resides in the secreted. It carries out the reaction a 1,2-diacyl-sn-glycero-3-phosphocholine + H2O = a 1-acyl-sn-glycero-3-phosphocholine + a fatty acid + H(+). Its function is as follows. PLA2 catalyzes the calcium-dependent hydrolysis of the 2-acyl groups in 3-sn-phosphoglycerides. The chain is Acidic phospholipase A2 Bc-PL from Bungarus candidus (Malayan krait).